Consider the following 651-residue polypeptide: DNA ligase (651 aa).

Residues 32-36, 75-76, and Glu106 each bind NAD(+); these read DAEYD and SL. Lys108 serves as the catalytic N6-AMP-lysine intermediate. The NAD(+) site is built by Arg129, Glu164, Lys271, and Lys295. The Zn(2+) site is built by Cys389, Cys392, Cys405, and Cys411. Residues 575-651 enclose the BRCT domain; sequence SSDSFLNNKI…LDEEQWNRLC (77 aa).

Belongs to the NAD-dependent DNA ligase family. LigA subfamily. It depends on Mg(2+) as a cofactor. Mn(2+) serves as cofactor.

It catalyses the reaction NAD(+) + (deoxyribonucleotide)n-3'-hydroxyl + 5'-phospho-(deoxyribonucleotide)m = (deoxyribonucleotide)n+m + AMP + beta-nicotinamide D-nucleotide.. In terms of biological role, DNA ligase that catalyzes the formation of phosphodiester linkages between 5'-phosphoryl and 3'-hydroxyl groups in double-stranded DNA using NAD as a coenzyme and as the energy source for the reaction. It is essential for DNA replication and repair of damaged DNA. This is DNA ligase from Wolbachia pipientis subsp. Culex pipiens (strain wPip).